The chain runs to 172 residues: Arginine repressor (172 aa).

Belongs to the ArgR family.

The protein resides in the cytoplasm. It functions in the pathway amino-acid biosynthesis; L-arginine biosynthesis [regulation]. Regulates arginine biosynthesis genes. The polypeptide is Arginine repressor (Bifidobacterium adolescentis (strain ATCC 15703 / DSM 20083 / NCTC 11814 / E194a)).